The sequence spans 253 residues: Ubiquinone/menaquinone biosynthesis C-methyltransferase UbiE (253 aa).

Residues T76, D97, and N125 to A126 contribute to the S-adenosyl-L-methionine site.

Belongs to the class I-like SAM-binding methyltransferase superfamily. MenG/UbiE family.

It catalyses the reaction a 2-demethylmenaquinol + S-adenosyl-L-methionine = a menaquinol + S-adenosyl-L-homocysteine + H(+). The catalysed reaction is a 2-methoxy-6-(all-trans-polyprenyl)benzene-1,4-diol + S-adenosyl-L-methionine = a 5-methoxy-2-methyl-3-(all-trans-polyprenyl)benzene-1,4-diol + S-adenosyl-L-homocysteine + H(+). It participates in quinol/quinone metabolism; menaquinone biosynthesis; menaquinol from 1,4-dihydroxy-2-naphthoate: step 2/2. Its pathway is cofactor biosynthesis; ubiquinone biosynthesis. In terms of biological role, methyltransferase required for the conversion of demethylmenaquinol (DMKH2) to menaquinol (MKH2) and the conversion of 2-polyprenyl-6-methoxy-1,4-benzoquinol (DDMQH2) to 2-polyprenyl-3-methyl-6-methoxy-1,4-benzoquinol (DMQH2). The sequence is that of Ubiquinone/menaquinone biosynthesis C-methyltransferase UbiE from Bradyrhizobium sp. (strain BTAi1 / ATCC BAA-1182).